The following is a 412-amino-acid chain: Sterol-4-alpha-carboxylate 3-dehydrogenase erg26, decarboxylating (412 aa).

NADP(+) is bound by residues 17-23 (GGCGFLG), 89-90 (DI), and 111-113 (TAT). Substrate contacts are provided by serine 158 and tyrosine 188. NADP(+) is bound by residues tyrosine 188, lysine 192, and 217–220 (PAGI). The Proton donor role is filled by lysine 192.

This sequence belongs to the 3-beta-HSD family. As to quaternary structure, heterotetramer of erg25, erg26, erg27 and erg28. Erg28 acts as a scaffold to tether erg27 and other 4,4-demethylation-related enzymes, forming a demethylation enzyme complex, in the endoplasmic reticulum.

It is found in the endoplasmic reticulum membrane. The protein operates within steroid metabolism; ergosterol biosynthesis. Sterol-C4-methyl oxidase; part of the third module of ergosterol biosynthesis pathway that includes the late steps of the pathway. Erg26 is a catalytic component of the C-4 demethylation complex that catalyzes the conversion of 4,4-dimethylfecosterol into fecosterol via 4-methylfecosterol. The third module or late pathway involves the ergosterol synthesis itself through consecutive reactions that mainly occur in the endoplasmic reticulum (ER) membrane. Firstly, the squalene synthase erg9 catalyzes the condensation of 2 farnesyl pyrophosphate moieties to form squalene, which is the precursor of all steroids. Squalene synthase is crucial for balancing the incorporation of farnesyl diphosphate (FPP) into sterol and nonsterol isoprene synthesis. Secondly, squalene is converted into lanosterol by the consecutive action of the squalene epoxidase erg1 and the lanosterol synthase erg7. Then, the delta(24)-sterol C-methyltransferase erg6 methylates lanosterol at C-24 to produce eburicol. Eburicol is the substrate of the sterol 14-alpha demethylase encoded by cyp51A and cyp51B, to yield 4,4,24-trimethyl ergosta-8,14,24(28)-trienol. The C-14 reductase erg24 then reduces the C14=C15 double bond which leads to 4,4-dimethylfecosterol. A sequence of further demethylations at C-4, involving the C-4 demethylation complex containing the C-4 methylsterol oxidases erg25A or erg25B, the sterol-4-alpha-carboxylate 3-dehydrogenase erg26 and the 3-keto-steroid reductase erg27, leads to the production of fecosterol via 4-methylfecosterol. The C-8 sterol isomerase erg2 then catalyzes the reaction which results in unsaturation at C-7 in the B ring of sterols and thus converts fecosterol to episterol. The sterol-C5-desaturase erg3B then catalyzes the introduction of a C-5 double bond in the B ring to produce 5-dehydroepisterol. The 2 other sterol-C5-desaturases, erg3A and erg3C, seem to be less important in ergosterol biosynthesis. The C-22 sterol desaturase erg5 further converts 5-dehydroepisterol into ergosta-5,7,22,24(28)-tetraen-3beta-ol by forming the C-22(23) double bond in the sterol side chain. Finally, ergosta-5,7,22,24(28)-tetraen-3beta-ol is substrate of the C-24(28) sterol reductases erg4A and erg4B to produce ergosterol. Possible alternative sterol biosynthetic pathways might exist from fecosterol to ergosterol, depending on the activities of the erg3 isoforms. The sequence is that of Sterol-4-alpha-carboxylate 3-dehydrogenase erg26, decarboxylating from Aspergillus fumigatus (strain ATCC MYA-4609 / CBS 101355 / FGSC A1100 / Af293) (Neosartorya fumigata).